The sequence spans 197 residues: Probable GTP-binding protein EngB (197 aa).

Residues 22 to 195 (QLPELALAGR…WRTILNHLKV (174 aa)) form the EngB-type G domain. Residues 30–37 (GRSNVGKS), 57–61 (GKTQT), 75–78 (DVPG), 142–145 (TKAD), and 174–176 (FSS) contribute to the GTP site. Mg(2+) is bound by residues Ser-37 and Thr-59.

It belongs to the TRAFAC class TrmE-Era-EngA-EngB-Septin-like GTPase superfamily. EngB GTPase family. Mg(2+) serves as cofactor.

In terms of biological role, necessary for normal cell division and for the maintenance of normal septation. The chain is Probable GTP-binding protein EngB from Shouchella clausii (strain KSM-K16) (Alkalihalobacillus clausii).